A 392-amino-acid chain; its full sequence is Xyloside xylosyltransferase 1 (392 aa).

At 1-19 the chain is on the cytoplasmic side; that stretch reads MGLLRGGAACARAMARLGA. Residues 20–42 traverse the membrane as a helical; Signal-anchor for type II membrane protein segment; sequence LRSHYCALLLAAALAVCAFYYLG. Residues 43 to 392 are Lumenal-facing; sequence SGRETFSSAT…GNCNTPIPED (350 aa). 103 to 105 contributes to the UDP-alpha-D-xylose binding site; the sequence is MFT. Asp-225 contacts Mn(2+). Leu-226 lines the UDP-alpha-D-xylose pocket. Mn(2+) is bound at residue Asp-227. An interaction with target proteins region spans residues 262–265; it reads HTFW. The UDP-alpha-D-xylose site is built by Ser-289, Leu-327, and Gln-330. A glycoprotein is bound by residues Gln-330 and Trp-359. Intrachain disulfides connect Cys-349–Cys-374 and Cys-356–Cys-385. Residue His-382 participates in Mn(2+) binding. Asn-384 contributes to the a glycoprotein binding site.

This sequence belongs to the glycosyltransferase 8 family. Homodimer. Dimer formation may be essential for the retention in endoplasmic reticulum. Mg(2+) is required as a cofactor. Requires Mn(2+) as cofactor.

The protein resides in the endoplasmic reticulum membrane. It carries out the reaction 3-O-[alpha-D-xylosyl-(1-&gt;3)-beta-D-glucosyl]-L-seryl-[EGF-like domain protein] + UDP-alpha-D-xylose = 3-O-[alpha-D-xylosyl-(1-&gt;3)-alpha-D-xylosyl-(1-&gt;3)-beta-D-glucosyl]-L-seryl-[EGF-like domain protein] + UDP + H(+). Functionally, alpha-1,3-xylosyltransferase, which elongates the O-linked xylose-glucose disaccharide attached to EGF-like repeats in the extracellular domain of target proteins by catalyzing the addition of the second xylose. Known targets include Notch proteins and coagulation factors, such as F9. The sequence is that of Xyloside xylosyltransferase 1 (Xxylt1) from Mus musculus (Mouse).